Here is a 426-residue protein sequence, read N- to C-terminus: Probable histidine--tRNA ligase (426 aa).

This sequence belongs to the class-II aminoacyl-tRNA synthetase family. Homodimer.

The protein localises to the cytoplasm. The enzyme catalyses tRNA(His) + L-histidine + ATP = L-histidyl-tRNA(His) + AMP + diphosphate + H(+). In Tropheryma whipplei (strain TW08/27) (Whipple's bacillus), this protein is Probable histidine--tRNA ligase (hisS).